The primary structure comprises 318 residues: NADH-ubiquinone oxidoreductase chain 1 (318 aa).

Helical transmembrane passes span 2-22, 76-96, 102-122, 146-166, 171-191, 217-237, 253-273, and 294-314; these read FMIN…FLTL, TLAL…YPLI, LLFI…SGWA, LAII…STLI, YLWL…STLA, AGPF…MNAL, ETYT…FLWV, and LPLT…ASCI.

It belongs to the complex I subunit 1 family. Core subunit of respiratory chain NADH dehydrogenase (Complex I) which is composed of 45 different subunits.

It is found in the mitochondrion inner membrane. The catalysed reaction is a ubiquinone + NADH + 5 H(+)(in) = a ubiquinol + NAD(+) + 4 H(+)(out). Its function is as follows. Core subunit of the mitochondrial membrane respiratory chain NADH dehydrogenase (Complex I) which catalyzes electron transfer from NADH through the respiratory chain, using ubiquinone as an electron acceptor. Essential for the catalytic activity and assembly of complex I. In Lemur catta (Ring-tailed lemur), this protein is NADH-ubiquinone oxidoreductase chain 1 (MT-ND1).